The following is a 231-amino-acid chain: 5'-methylthioadenosine/S-adenosylhomocysteine nucleosidase (231 aa).

Residue E12 is the Proton acceptor of the active site. Substrate is bound by residues G78, M153, and 174–175 (ME). Catalysis depends on D198, which acts as the Proton donor.

It belongs to the PNP/UDP phosphorylase family. MtnN subfamily.

The enzyme catalyses S-adenosyl-L-homocysteine + H2O = S-(5-deoxy-D-ribos-5-yl)-L-homocysteine + adenine. It carries out the reaction S-methyl-5'-thioadenosine + H2O = 5-(methylsulfanyl)-D-ribose + adenine. It catalyses the reaction 5'-deoxyadenosine + H2O = 5-deoxy-D-ribose + adenine. It functions in the pathway amino-acid biosynthesis; L-methionine biosynthesis via salvage pathway; S-methyl-5-thio-alpha-D-ribose 1-phosphate from S-methyl-5'-thioadenosine (hydrolase route): step 1/2. Functionally, catalyzes the irreversible cleavage of the glycosidic bond in both 5'-methylthioadenosine (MTA) and S-adenosylhomocysteine (SAH/AdoHcy) to adenine and the corresponding thioribose, 5'-methylthioribose and S-ribosylhomocysteine, respectively. Also cleaves 5'-deoxyadenosine, a toxic by-product of radical S-adenosylmethionine (SAM) enzymes, into 5-deoxyribose and adenine. The chain is 5'-methylthioadenosine/S-adenosylhomocysteine nucleosidase from Bacillus cytotoxicus (strain DSM 22905 / CIP 110041 / 391-98 / NVH 391-98).